We begin with the raw amino-acid sequence, 224 residues long: 7-cyano-7-deazaguanine synthase (224 aa).

An ATP-binding site is contributed by 10–20 (LSGGLDSATVA). Residues C189, C199, C202, and C205 each contribute to the Zn(2+) site.

This sequence belongs to the QueC family. It depends on Zn(2+) as a cofactor.

The catalysed reaction is 7-carboxy-7-deazaguanine + NH4(+) + ATP = 7-cyano-7-deazaguanine + ADP + phosphate + H2O + H(+). The protein operates within purine metabolism; 7-cyano-7-deazaguanine biosynthesis. Catalyzes the ATP-dependent conversion of 7-carboxy-7-deazaguanine (CDG) to 7-cyano-7-deazaguanine (preQ(0)). In Azotobacter vinelandii (strain DJ / ATCC BAA-1303), this protein is 7-cyano-7-deazaguanine synthase.